Consider the following 162-residue polypeptide: Retinoic acid receptor responder protein 2 (162 aa).

The N-terminal stretch at 1 to 20 (MWQLLLPLALGLGTMGLGRA) is a signal peptide. Intrachain disulfides connect cysteine 77-cysteine 87, cysteine 98-cysteine 117, and cysteine 101-cysteine 135. Positions 156 to 162 (FIKALSP) are excised as a propeptide.

Post-translationally, secreted in an inactive precursor form, prochemerin, which is proteolytically processed by a variety of extracellular proteases to generate forms with differing levels of bioactivity. For example, the removal of five amino acids results in chemerin-157, which exhibits the highest activity, while removal of six amino acids results in chemerin-156 which has slightly less activity. Some proteases are able to cleave at more than one site and chemerin forms may be sequentially processed by different enzymes to modulate activity levels. The coordinated expression and activity of chemerin-modifying enzymes is essential for regulating its bioactivation, inactivation and, consequently, biological function. Cathepsin G cleaves six C-terminal amino acids from prochemerin (chemerin-156), elastase is able to cleave five (chemerin-157), seven (chemerin-155) or ten (chemerin-152), plasmin cleaves four amino acids (chemerin-158), and tryptase cleaves four (chemerin-158) or seven (chemerin-155). Multiple cleavages might be required to fully activate chemerin, with an initial tryptase cleavage resulting in chemerin with low activity (chemerin-158), and a second cleavage by carboxypeptidase N or B producing highly active chemerin (chemerin-157).

The protein localises to the secreted. In terms of biological role, adipocyte-secreted protein (adipokine) that regulates adipogenesis, metabolism and inflammation through activation of the chemokine-like receptor 1 (CMKLR1). Also acts as a ligand for CMKLR2. Can also bind to C-C chemokine receptor-like 2 (CCRL2), but with a lower affinity than it does to CMKLR1 or CMKLR2. Positively regulates adipocyte differentiation, modulates the expression of adipocyte genes involved in lipid and glucose metabolism and might play a role in angiogenesis, a process essential for the expansion of white adipose tissue. Also acts as a pro-inflammatory adipokine, causing an increase in secretion of pro-inflammatory and prodiabetic adipokines, which further impair adipose tissue metabolic function and have negative systemic effects including impaired insulin sensitivity, altered glucose and lipid metabolism, and a decrease in vascular function in other tissues. Can have both pro- and anti-inflammatory properties depending on the modality of enzymatic cleavage by different classes of proteases. Acts as a chemotactic factor for leukocyte populations expressing CMKLR1, particularly immature plasmacytoid dendritic cells, but also immature myeloid DCs, macrophages and natural killer cells. Exerts an anti-inflammatory role by preventing TNF/TNFA-induced VCAM1 expression and monocytes adhesion in vascular endothelial cells. The effect is mediated via inhibiting activation of NF-kappa-B and CRK/p38 through stimulation of AKT1/NOS3 signaling and nitric oxide production. Exhibits an antimicrobial function in the skin. The polypeptide is Retinoic acid receptor responder protein 2 (RARRES2) (Bos taurus (Bovine)).